The sequence spans 160 residues: 2-C-methyl-D-erythritol 2,4-cyclodiphosphate synthase (160 aa).

Asp-11 and His-13 together coordinate a divalent metal cation. 4-CDP-2-C-methyl-D-erythritol 2-phosphate contacts are provided by residues 11-13 (DVH) and 37-38 (HS). Position 45 (His-45) interacts with a divalent metal cation. 4-CDP-2-C-methyl-D-erythritol 2-phosphate contacts are provided by residues 59-61 (DIG), 64-68 (FPDTD), 135-138 (TTTE), Phe-142, and Arg-145.

Belongs to the IspF family. As to quaternary structure, homotrimer. A divalent metal cation is required as a cofactor.

The enzyme catalyses 4-CDP-2-C-methyl-D-erythritol 2-phosphate = 2-C-methyl-D-erythritol 2,4-cyclic diphosphate + CMP. It participates in isoprenoid biosynthesis; isopentenyl diphosphate biosynthesis via DXP pathway; isopentenyl diphosphate from 1-deoxy-D-xylulose 5-phosphate: step 4/6. Involved in the biosynthesis of isopentenyl diphosphate (IPP) and dimethylallyl diphosphate (DMAPP), two major building blocks of isoprenoid compounds. Catalyzes the conversion of 4-diphosphocytidyl-2-C-methyl-D-erythritol 2-phosphate (CDP-ME2P) to 2-C-methyl-D-erythritol 2,4-cyclodiphosphate (ME-CPP) with a corresponding release of cytidine 5-monophosphate (CMP). The chain is 2-C-methyl-D-erythritol 2,4-cyclodiphosphate synthase from Alcanivorax borkumensis (strain ATCC 700651 / DSM 11573 / NCIMB 13689 / SK2).